The primary structure comprises 159 residues: Nucleotide-binding protein Avin_13410 (159 aa).

This sequence belongs to the YajQ family.

Functionally, nucleotide-binding protein. The protein is Nucleotide-binding protein Avin_13410 of Azotobacter vinelandii (strain DJ / ATCC BAA-1303).